The chain runs to 332 residues: Holliday junction branch migration complex subunit RuvB (332 aa).

The segment at M1 to Y181 is large ATPase domain (RuvB-L). ATP contacts are provided by residues L20, R21, G62, K65, T66, T67, E128 to F130, R171, Y181, and R218. Residue T66 participates in Mg(2+) binding. Residues A182 to D252 form a small ATPAse domain (RuvB-S) region. Residues H255 to K332 form a head domain (RuvB-H) region. DNA contacts are provided by R291, R310, R312, and R315.

Belongs to the RuvB family. As to quaternary structure, homohexamer. Forms an RuvA(8)-RuvB(12)-Holliday junction (HJ) complex. HJ DNA is sandwiched between 2 RuvA tetramers; dsDNA enters through RuvA and exits via RuvB. An RuvB hexamer assembles on each DNA strand where it exits the tetramer. Each RuvB hexamer is contacted by two RuvA subunits (via domain III) on 2 adjacent RuvB subunits; this complex drives branch migration. In the full resolvosome a probable DNA-RuvA(4)-RuvB(12)-RuvC(2) complex forms which resolves the HJ.

Its subcellular location is the cytoplasm. It carries out the reaction ATP + H2O = ADP + phosphate + H(+). The RuvA-RuvB-RuvC complex processes Holliday junction (HJ) DNA during genetic recombination and DNA repair, while the RuvA-RuvB complex plays an important role in the rescue of blocked DNA replication forks via replication fork reversal (RFR). RuvA specifically binds to HJ cruciform DNA, conferring on it an open structure. The RuvB hexamer acts as an ATP-dependent pump, pulling dsDNA into and through the RuvAB complex. RuvB forms 2 homohexamers on either side of HJ DNA bound by 1 or 2 RuvA tetramers; 4 subunits per hexamer contact DNA at a time. Coordinated motions by a converter formed by DNA-disengaged RuvB subunits stimulates ATP hydrolysis and nucleotide exchange. Immobilization of the converter enables RuvB to convert the ATP-contained energy into a lever motion, pulling 2 nucleotides of DNA out of the RuvA tetramer per ATP hydrolyzed, thus driving DNA branch migration. The RuvB motors rotate together with the DNA substrate, which together with the progressing nucleotide cycle form the mechanistic basis for DNA recombination by continuous HJ branch migration. Branch migration allows RuvC to scan DNA until it finds its consensus sequence, where it cleaves and resolves cruciform DNA. The sequence is that of Holliday junction branch migration complex subunit RuvB from Streptococcus pneumoniae serotype 19F (strain G54).